The sequence spans 106 residues: MSDVLDRLAELLEQRKSADPQSSYVAKLYAKGTDAILKKIGEEATEAIIAAKDGDAEQIVYETADLWFHSLVMLANAGLGPQDVLRELARREGLSGLEEKASRPVE.

It belongs to the PRA-PH family.

The protein resides in the cytoplasm. It catalyses the reaction 1-(5-phospho-beta-D-ribosyl)-ATP + H2O = 1-(5-phospho-beta-D-ribosyl)-5'-AMP + diphosphate + H(+). It functions in the pathway amino-acid biosynthesis; L-histidine biosynthesis; L-histidine from 5-phospho-alpha-D-ribose 1-diphosphate: step 2/9. The sequence is that of Phosphoribosyl-ATP pyrophosphatase from Methylobacillus flagellatus (strain ATCC 51484 / DSM 6875 / VKM B-1610 / KT).